Consider the following 565-residue polypeptide: Calcium-dependent protein kinase 21 (565 aa).

Gly2 carries N-myristoyl glycine lipidation. A disordered region spans residues 28 to 55 (PVPDAEAASPRKDGVDGDGDDVRGGGGG). A compositionally biased stretch (basic and acidic residues) spans 36-50 (SPRKDGVDGDGDDVR). Residues 77 to 358 (YVLGKELGRG…AKQVLEHPWL (282 aa)) enclose the Protein kinase domain. Residues 83–91 (LGRGEFGVT) and Lys106 contribute to the ATP site. The Proton acceptor role is filled by Asp224. The interval 364-394 (APNVSLGDAVRARLQQFSAMNKFKKKALGVV) is autoinhibitory domain. 4 consecutive EF-hand domains span residues 401–436 (EEVDKYVQMFHHMDKDKNGHLSLDELLEGLHINGQP), 437–472 (VPEPEIRMLLEAADTDGNGTLDCDEFVTVSVHLKKM), 473–500 (SNDEYLAAAFNYFDKDGSGFIELDELRE), and 504–539 (PNEQAILEILRDVDTDKDGRISYQEFELMMKSGADW). Positions 414, 416, 418, 420, 425, 450, 452, 454, 456, 461, 486, 488, 490, 497, 517, 519, 521, 523, and 528 each coordinate Ca(2+).

This sequence belongs to the protein kinase superfamily. Ser/Thr protein kinase family. CDPK subfamily. Expressed in spikelets and developing seeds.

The protein localises to the membrane. It carries out the reaction L-seryl-[protein] + ATP = O-phospho-L-seryl-[protein] + ADP + H(+). The enzyme catalyses L-threonyl-[protein] + ATP = O-phospho-L-threonyl-[protein] + ADP + H(+). With respect to regulation, activated by calcium. Autophosphorylation may play an important role in the regulation of the kinase activity. Functionally, may play a role in signal transduction pathways that involve calcium as a second messenger. Functions in signal transduction pathways that positively regulate responses to abscisic acid (ABA) and salt stress. The protein is Calcium-dependent protein kinase 21 of Oryza sativa subsp. japonica (Rice).